The chain runs to 120 residues: UPF0231 protein YacL (120 aa).

Belongs to the UPF0231 family.

In Salmonella heidelberg (strain SL476), this protein is UPF0231 protein YacL.